Reading from the N-terminus, the 385-residue chain is MERNVTLDFVRGVAILGILLLNISAFGLPKAAYLNPAWYGAITPRDAWTWAFLDLIGQVKFLTLFALLFGAGLQMLLPRGRRWIQSRLTLLVLLGFIHGLLFWDGDILLAYGLVGLICWRLVRDAPSVKSLFNTGVMLYLVGLGVLLLLGLISDSQTSRAWTPDASAILYEKYWKLHGGVEAISNRADGVGNSLLALGAQYGWQLAGMMLIGAALMRSGWLKGQFSLRHYRRTGFVLVAIGVTINLPAIALQWQLDWAYRWCAFLLQMPRELSAPFQAIGYASLFYGFWPQLSRFKLVLAIACVGRMALTNYLLQTLICTTLFYHLGLFMHFDRLELLAFVIPVWLANILFSVIWLRYFRQGPVEWLWRQLTLRAAGPAISKTSR.

9 consecutive transmembrane segments (helical) span residues 12–32, 50–70, 90–110, 132–152, 195–215, 233–253, 272–292, 312–332, and 335–355; these read GVAI…PKAA, WAFL…LLFG, LLVL…ILLA, FNTG…LGLI, LALG…GAAL, TGFV…ALQW, LSAP…WPQL, YLLQ…FMHF, and LELL…SVIW.

It to B.subtilis YxaH and YrkO.

Its subcellular location is the cell membrane. Involved in transport. This is an uncharacterized protein from Escherichia coli (strain K12).